A 271-amino-acid polypeptide reads, in one-letter code: Acetyl-coenzyme A carboxylase carboxyl transferase subunit alpha (271 aa).

Residues 1–247 (MSRELIRTAD…KKTILEALGE (247 aa)) form the CoA carboxyltransferase C-terminal domain.

This sequence belongs to the AccA family. Acetyl-CoA carboxylase is a heterohexamer composed of biotin carboxyl carrier protein (AccB), biotin carboxylase (AccC) and two subunits each of ACCase subunit alpha (AccA) and ACCase subunit beta (AccD).

Its subcellular location is the cytoplasm. The enzyme catalyses N(6)-carboxybiotinyl-L-lysyl-[protein] + acetyl-CoA = N(6)-biotinyl-L-lysyl-[protein] + malonyl-CoA. The protein operates within lipid metabolism; malonyl-CoA biosynthesis; malonyl-CoA from acetyl-CoA: step 1/1. Functionally, component of the acetyl coenzyme A carboxylase (ACC) complex. First, biotin carboxylase catalyzes the carboxylation of biotin on its carrier protein (BCCP) and then the CO(2) group is transferred by the carboxyltransferase to acetyl-CoA to form malonyl-CoA. The protein is Acetyl-coenzyme A carboxylase carboxyl transferase subunit alpha of Clostridium perfringens (strain 13 / Type A).